The chain runs to 296 residues: ATP-dependent ribose-1-phosphate kinase (296 aa).

The active-site Proton acceptor is Asp-242.

It belongs to the carbohydrate kinase PfkB family. Requires Mg(2+) as cofactor.

The catalysed reaction is alpha-D-ribose 1-phosphate + ATP = alpha-D-ribose 1,5-bisphosphate + ADP + H(+). With respect to regulation, requires salt for kinase activity. 2.0 M is the optimal KCl concentration. Its function is as follows. Kinase involved in the non-carboxylating pentose bisphosphate pathway, a nucleoside degradation pathway present in some halophilic archaea. Catalyzes the ATP-dependent phosphorylation of ribose 1-phosphate (R1P) to ribose 1,5-bisphosphate (R15P). Shows weak activity towards various other phosphate acceptors, such as xylulose, 2'-deoxyguanosine and D-ribulose. ATP is the most preferred phosphate donor, followed by CTP and GTP. This chain is ATP-dependent ribose-1-phosphate kinase, found in Halopiger xanaduensis (strain DSM 18323 / JCM 14033 / SH-6).